Reading from the N-terminus, the 1205-residue chain is Nitric oxide synthase 3 (1205 aa).

The tract at residues 1–73 (MGNLKSVGQE…PPEGPKFPRV (73 aa)) is disordered. G2 is lipidated: N-myristoyl glycine. 2 S-palmitoyl cysteine lipidation sites follow: C15 and C26. Residues 15–27 (CGLGLGLGLGLCG) are compositionally biased toward gly residues. Residues 33-47 (SPAPEPSRAPAPATP) show a composition bias toward pro residues. Positions 96 and 101 each coordinate Zn(2+). The interaction with NOSIP stretch occupies residues 100–488 (CCLGSLVLPR…PDPWKGSATK (389 aa)). (6R)-L-erythro-5,6,7,8-tetrahydrobiopterin is bound at residue S104. S116 carries the post-translational modification Phosphoserine; by CDK5. C186 contacts heme b. Residues Q249, W358, Y359, E363, and N368 each coordinate L-arginine. Residues A448, W449, and F462 each coordinate (6R)-L-erythro-5,6,7,8-tetrahydrobiopterin. Residue Y477 participates in heme b binding. The segment at 492-512 (ITRKKTFKEVANAVKISASLM) is calmodulin-binding. T497 bears the Phosphothreonine; by AMPK and PKA mark. The Flavodoxin-like domain occupies 522–705 (ATILYASETG…AFRGWAKAAF (184 aa)). S528, E529, T530, R532, S574, and T575 together coordinate FMN. Residues S617, S635, and S640 each carry the phosphoserine modification. Residues S656, C663, E689, and Q693 each coordinate FMN. The 247-residue stretch at 758 to 1004 (RKMFQATVLS…IRGAPSFRLP (247 aa)) folds into the FAD-binding FR-type domain. R778 is a binding site for NADP(+). H800 is an FAD binding site. The interval 820 to 847 (EDPPPPTESVAVEQLEKGSPGGPPPSWV) is disordered. Residue S838 is modified to Phosphoserine. The FAD site is built by R940, Y942, S943, T958, A960, Y964, V977, C978, and S979. Positions 1018, 1051, 1080, 1081, 1087, 1089, and 1091 each coordinate NADP(+). Position 1177 is a phosphothreonine (T1177). Position 1179 is a phosphoserine; by AMPK, PDPK1 and PKA (S1179). Residue S1181 is modified to Phosphoserine.

This sequence belongs to the NOS family. Homodimer. Interacts with NOSIP and NOSTRIN. Interacts with HSP90AB1. Forms a complex with ASL, ASS1 and SLC7A1; the complex regulates cell-autonomous L-arginine synthesis and citrulline recycling while channeling extracellular L-arginine to nitric oxide synthesis pathway. Requires heme b as cofactor. FAD is required as a cofactor. It depends on FMN as a cofactor. (6R)-L-erythro-5,6,7,8-tetrahydrobiopterin serves as cofactor. Post-translationally, phosphorylation by AMPK at Ser-1179 in the presence of Ca(2+)-calmodulin (CaM) activates activity. In absence of Ca(2+)-calmodulin, AMPK also phosphorylates Thr-497, resulting in inhibition of activity. Phosphorylation of Ser-116 by CDK5 reduces activity.

It is found in the cell membrane. It localises to the membrane. Its subcellular location is the caveola. The protein localises to the cytoplasm. The protein resides in the cytoskeleton. It is found in the golgi apparatus. The enzyme catalyses 2 L-arginine + 3 NADPH + 4 O2 + H(+) = 2 L-citrulline + 2 nitric oxide + 3 NADP(+) + 4 H2O. With respect to regulation, stimulated by calcium/calmodulin. Inhibited by NOSIP and NOSTRIN. Functionally, produces nitric oxide (NO) which is implicated in vascular smooth muscle relaxation through a cGMP-mediated signal transduction pathway. NO mediates vascular endothelial growth factor (VEGF)-induced angiogenesis in coronary vessels and promotes blood clotting through the activation of platelets. The sequence is that of Nitric oxide synthase 3 (NOS3) from Bos taurus (Bovine).